Here is a 525-residue protein sequence, read N- to C-terminus: Probable protein kinase UbiB (525 aa).

The region spanning 118 to 500 (EFERVPVASA…QRRTNRLLQA (383 aa)) is the Protein kinase domain. ATP-binding positions include 124–132 (VASASIAQV) and Lys-150. The Proton acceptor role is filled by Asp-285. A helical transmembrane segment spans residues 501–521 (LLVFGLAVGAGAVIARVLIVL).

It belongs to the ABC1 family. UbiB subfamily.

The protein resides in the cell inner membrane. The protein operates within cofactor biosynthesis; ubiquinone biosynthesis [regulation]. In terms of biological role, is probably a protein kinase regulator of UbiI activity which is involved in aerobic coenzyme Q (ubiquinone) biosynthesis. The sequence is that of Probable protein kinase UbiB from Burkholderia mallei (strain SAVP1).